We begin with the raw amino-acid sequence, 270 residues long: MVKVAVTGALGRMGSGIIKTITETDGLDVVAAIDIPNHPKKGLDIGELTGVGKIGVALSTSDELEVVLKESGAEVLVDFTAPAPCVNTAKTAAKLGVNLVIGTTGFTSEQRAEMENAISENKVAATISQNYAVGVNIFFKTLELLAQKLGDYDIELIEMHHKFKKDAPSGTALRAAEIIQNNLNRDSNLIFGRKGITGERTKEEICIHALRGGDVVGDHTAMFAADGERLELTHKASSRQSFISGVILAVKFVAEKKEGIYNTFDVLDLN.

NAD(+) contacts are provided by residues 8–13 (GALGRM), D34, 102–104 (GTT), and 128–131 (SQNY). H160 serves as the catalytic Proton donor/acceptor. H161 is a (S)-2,3,4,5-tetrahydrodipicolinate binding site. K164 serves as the catalytic Proton donor. 170-171 (GT) is a binding site for (S)-2,3,4,5-tetrahydrodipicolinate.

It belongs to the DapB family.

It localises to the cytoplasm. The catalysed reaction is (S)-2,3,4,5-tetrahydrodipicolinate + NAD(+) + H2O = (2S,4S)-4-hydroxy-2,3,4,5-tetrahydrodipicolinate + NADH + H(+). The enzyme catalyses (S)-2,3,4,5-tetrahydrodipicolinate + NADP(+) + H2O = (2S,4S)-4-hydroxy-2,3,4,5-tetrahydrodipicolinate + NADPH + H(+). The protein operates within amino-acid biosynthesis; L-lysine biosynthesis via DAP pathway; (S)-tetrahydrodipicolinate from L-aspartate: step 4/4. Functionally, catalyzes the conversion of 4-hydroxy-tetrahydrodipicolinate (HTPA) to tetrahydrodipicolinate. The sequence is that of 4-hydroxy-tetrahydrodipicolinate reductase from Methanococcus maripaludis (strain C5 / ATCC BAA-1333).